Consider the following 419-residue polypeptide: Vacuolar aspartic protease (419 aa).

The N-terminal stretch at 1 to 22 (MQLSLSALTTVALALTSSLVDA) is a signal peptide. Residues 104-415 (YFTEIQIGTP…DLDKNAVGLA (312 aa)) enclose the Peptidase A1 domain. The active site involves Asp122. Cysteines 135 and 140 form a disulfide. The N-linked (GlcNAc...) asparagine glycan is linked to Asn157. Asp307 is a catalytic residue. Cys341 and Cys374 form a disulfide bridge. Asn358 carries an N-linked (GlcNAc...) asparagine glycan. The Microbody targeting signal signature appears at 417 to 419 (TKV).

The protein belongs to the peptidase A1 family.

It is found in the vacuole. The sequence is that of Vacuolar aspartic protease (APR1) from Candida albicans (Yeast).